Reading from the N-terminus, the 362-residue chain is MSLQSIKYQRGSLEILDQLLLPVVSKYLPVRGVEDGWKVINKMQVRGAPAIAIVGCLSLAVEIYPEEFSSKKSLRQEIEGKLNYLVSARPTAVNMKISADELITLANELTKDDAITVEEMKQRFLKATEAMLEKDIADNRAIGANGAKAILEHVAEATGVATAGPVRVLTHCNTGSLATAGYGTALGVVRNLSELGKLEHVYCTETRPYNQGARLTAYELVHEKLPATLVLDSMVAALLRVKNVAAVVVGADRVAANGDTANKIGTYQIAVVAKHHGVPFYVAAPLTSIDLEIPSGDHIIIEVRPDREMTHVGEHRIAAPGINCWNPAFDVTPASLITGIITEHGVFKPEALKVEITKLLEL.

Asp-252 serves as the catalytic Proton donor.

It belongs to the eIF-2B alpha/beta/delta subunits family. MtnA subfamily.

It is found in the cytoplasm. It localises to the nucleus. It carries out the reaction 5-(methylsulfanyl)-alpha-D-ribose 1-phosphate = 5-(methylsulfanyl)-D-ribulose 1-phosphate. The protein operates within amino-acid biosynthesis; L-methionine biosynthesis via salvage pathway; L-methionine from S-methyl-5-thio-alpha-D-ribose 1-phosphate: step 1/6. In terms of biological role, catalyzes the interconversion of methylthioribose-1-phosphate (MTR-1-P) into methylthioribulose-1-phosphate (MTRu-1-P). This is Methylthioribose-1-phosphate isomerase from Drosophila mojavensis (Fruit fly).